A 419-amino-acid chain; its full sequence is Peptide chain release factor subunit 1 (419 aa).

Belongs to the eukaryotic release factor 1 family. As to quaternary structure, heterodimer of two subunits, one of which binds GTP.

It localises to the cytoplasm. Its function is as follows. Directs the termination of nascent peptide synthesis (translation) in response to the termination codons UAA, UAG and UGA. This is Peptide chain release factor subunit 1 from Methanococcus maripaludis (strain C7 / ATCC BAA-1331).